We begin with the raw amino-acid sequence, 525 residues long: Chromosomal replication initiator protein DnaA (525 aa).

Residues Met1–Thr71 form a domain I, interacts with DnaA modulators region. The interval Thr71–Ser188 is domain II. The tract at residues Ala160–Ala181 is disordered. A compositionally biased stretch (low complexity) spans Pro169–Ala181. Residues Lys189 to Ser405 are domain III, AAA+ region. The ATP site is built by Gly233, Gly235, Lys236, and Thr237. Positions Lys406 to Gly525 are domain IV, binds dsDNA.

Belongs to the DnaA family. Oligomerizes as a right-handed, spiral filament on DNA at oriC.

Its subcellular location is the cytoplasm. Functionally, plays an essential role in the initiation and regulation of chromosomal replication. ATP-DnaA binds to the origin of replication (oriC) to initiate formation of the DNA replication initiation complex once per cell cycle. Binds the DnaA box (a 9 base pair repeat at the origin) and separates the double-stranded (ds)DNA. Forms a right-handed helical filament on oriC DNA; dsDNA binds to the exterior of the filament while single-stranded (ss)DNA is stabiized in the filament's interior. The ATP-DnaA-oriC complex binds and stabilizes one strand of the AT-rich DNA unwinding element (DUE), permitting loading of DNA polymerase. After initiation quickly degrades to an ADP-DnaA complex that is not apt for DNA replication. Binds acidic phospholipids. This chain is Chromosomal replication initiator protein DnaA, found in Burkholderia vietnamiensis (strain G4 / LMG 22486) (Burkholderia cepacia (strain R1808)).